We begin with the raw amino-acid sequence, 650 residues long: SPARC-like protein 1 (650 aa).

A signal peptide spans 1-16 (MKAVLLLLCALGTAVA). Positions 51–352 (TADIENHPSD…HGAGDDYFIP (302 aa)) are disordered. Residues 54 to 64 (IENHPSDKAEK) are compositionally biased toward basic and acidic residues. Phosphoserine is present on residues serine 70, serine 78, and serine 86. Residues 75-85 (HEQSTEQDKTY) show a composition bias toward basic and acidic residues. Residues 91-101 (LKDEEDGDGDL) are compositionally biased toward acidic residues. 2 stretches are compositionally biased toward polar residues: residues 116 to 126 (EGTSEPQQKSL) and 135 to 148 (TVSTSYVDPNQRAN). A glycan (N-linked (GlcNAc...) asparagine) is linked at asparagine 148. Phosphoserine occurs at positions 155 and 163. A compositionally biased stretch (polar residues) spans 157 to 174 (EQPVSDSHQQPNESSKQT). Asparagine 168 carries N-linked (GlcNAc...) asparagine glycosylation. Over residues 189 to 210 (IPNEEEEEEEDEEEEEEEEPED) the composition is skewed to acidic residues. Serine 272 carries the phosphoserine modification. Positions 277-299 (EDKAAGSKEHIPHTEQQDQEGKA) are enriched in basic and acidic residues. Phosphoserine is present on serine 353. Residues 375–415 (EETTTGESENRREAADNQEAKKAESSPNAEPSDEGNSREHS) form a disordered region. The span at 382–398 (SENRREAADNQEAKKAE) shows a compositional bias: basic and acidic residues. The residue at position 406 (serine 406) is a Phosphoserine. Positions 418–440 (SCTNFQCKRGHICKTDPQGKPHC) constitute a Follistatin-like domain. Disulfide bonds link cysteine 419/cysteine 430, cysteine 424/cysteine 440, cysteine 442/cysteine 476, cysteine 448/cysteine 469, cysteine 458/cysteine 495, cysteine 501/cysteine 612, and cysteine 620/cysteine 636. The Kazal-like domain occupies 436–497 (GKPHCVCQDP…QLDYFGACKS (62 aa)). Asparagine 462 carries an N-linked (GlcNAc...) asparagine glycan. Positions 608 to 643 (PMEHCITRFFEECDPNKDKHITLKEWGHCFGIKEED) constitute an EF-hand domain. Residues aspartate 621, asparagine 623, aspartate 625, histidine 627, and glutamate 632 each contribute to the Ca(2+) site.

The protein belongs to the SPARC family. As to expression, highest expression in brain. Moderate levels in heart, adrenal gland, epididymis and lung. Low levels in kidney, eye, liver, spleen, submandibular gland and testis.

It is found in the secreted. It localises to the extracellular space. The protein resides in the extracellular matrix. The chain is SPARC-like protein 1 (Sparcl1) from Mus musculus (Mouse).